The sequence spans 54 residues: Ribulose bisphosphate carboxylase large chain (54 aa).

Residues 1-2 (MS) constitute a propeptide that is removed on maturation. N-acetylproline is present on Pro3. At Lys14 the chain carries N6,N6,N6-trimethyllysine.

This sequence belongs to the RuBisCO large chain family. Type I subfamily. As to quaternary structure, heterohexadecamer of 8 large chains and 8 small chains.

The protein localises to the plastid. Its subcellular location is the chloroplast. It carries out the reaction 2 (2R)-3-phosphoglycerate + 2 H(+) = D-ribulose 1,5-bisphosphate + CO2 + H2O. It catalyses the reaction D-ribulose 1,5-bisphosphate + O2 = 2-phosphoglycolate + (2R)-3-phosphoglycerate + 2 H(+). Its function is as follows. RuBisCO catalyzes two reactions: the carboxylation of D-ribulose 1,5-bisphosphate, the primary event in carbon dioxide fixation, as well as the oxidative fragmentation of the pentose substrate in the photorespiration process. Both reactions occur simultaneously and in competition at the same active site. This Icacina mannii protein is Ribulose bisphosphate carboxylase large chain (rbcL).